The sequence spans 92 residues: Probable Fe(2+)-trafficking protein (92 aa).

This sequence belongs to the Fe(2+)-trafficking protein family.

Functionally, could be a mediator in iron transactions between iron acquisition and iron-requiring processes, such as synthesis and/or repair of Fe-S clusters in biosynthetic enzymes. The chain is Probable Fe(2+)-trafficking protein from Shewanella halifaxensis (strain HAW-EB4).